We begin with the raw amino-acid sequence, 259 residues long: Small ribosomal subunit protein uS2 (259 aa).

Belongs to the universal ribosomal protein uS2 family.

The protein is Small ribosomal subunit protein uS2 of Fervidobacterium nodosum (strain ATCC 35602 / DSM 5306 / Rt17-B1).